The chain runs to 448 residues: tRNA-2-methylthio-N(6)-dimethylallyladenosine synthase (448 aa).

Residues 3–118 form the MTTase N-terminal domain; it reads KKVFIKTFGC…LPELLNARAA (116 aa). Residues cysteine 12, cysteine 49, cysteine 81, cysteine 155, cysteine 159, and cysteine 162 each contribute to the [4Fe-4S] cluster site. The Radical SAM core domain occupies 141-374; the sequence is RVEGASAFVS…QAVINRNILE (234 aa). The 64-residue stretch at 377-440 folds into the TRAM domain; the sequence is QERVGTVQRL…TYTLRGEVVM (64 aa).

This sequence belongs to the methylthiotransferase family. MiaB subfamily. As to quaternary structure, monomer. [4Fe-4S] cluster serves as cofactor.

Its subcellular location is the cytoplasm. The enzyme catalyses N(6)-dimethylallyladenosine(37) in tRNA + (sulfur carrier)-SH + AH2 + 2 S-adenosyl-L-methionine = 2-methylsulfanyl-N(6)-dimethylallyladenosine(37) in tRNA + (sulfur carrier)-H + 5'-deoxyadenosine + L-methionine + A + S-adenosyl-L-homocysteine + 2 H(+). Catalyzes the methylthiolation of N6-(dimethylallyl)adenosine (i(6)A), leading to the formation of 2-methylthio-N6-(dimethylallyl)adenosine (ms(2)i(6)A) at position 37 in tRNAs that read codons beginning with uridine. This is tRNA-2-methylthio-N(6)-dimethylallyladenosine synthase from Acidovorax sp. (strain JS42).